Here is a 428-residue protein sequence, read N- to C-terminus: Serine--tRNA ligase (428 aa).

231-233 (TSE) contacts L-serine. Residues 262 to 264 (RRE) and Val278 contribute to the ATP site. Glu285 provides a ligand contact to L-serine. Residue 349 to 352 (ELTS) coordinates ATP. Thr384 contacts L-serine.

Belongs to the class-II aminoacyl-tRNA synthetase family. Type-1 seryl-tRNA synthetase subfamily. As to quaternary structure, homodimer. The tRNA molecule binds across the dimer.

It is found in the cytoplasm. It catalyses the reaction tRNA(Ser) + L-serine + ATP = L-seryl-tRNA(Ser) + AMP + diphosphate + H(+). It carries out the reaction tRNA(Sec) + L-serine + ATP = L-seryl-tRNA(Sec) + AMP + diphosphate + H(+). Its pathway is aminoacyl-tRNA biosynthesis; selenocysteinyl-tRNA(Sec) biosynthesis; L-seryl-tRNA(Sec) from L-serine and tRNA(Sec): step 1/1. Catalyzes the attachment of serine to tRNA(Ser). Is also able to aminoacylate tRNA(Sec) with serine, to form the misacylated tRNA L-seryl-tRNA(Sec), which will be further converted into selenocysteinyl-tRNA(Sec). This is Serine--tRNA ligase from Bifidobacterium adolescentis (strain ATCC 15703 / DSM 20083 / NCTC 11814 / E194a).